Here is a 393-residue protein sequence, read N- to C-terminus: Short-chain dehydrogenase/reductase family 42E member 1 (393 aa).

The Proton acceptor role is filled by Tyr152. NAD(+) is bound at residue Lys156. Helical transmembrane passes span 282–302 (LPLT…FILG) and 371–391 (GLLV…SVIL).

This sequence belongs to the 3-beta-HSD family.

Its subcellular location is the membrane. The chain is Short-chain dehydrogenase/reductase family 42E member 1 (SDR42E1) from Macaca fascicularis (Crab-eating macaque).